The chain runs to 486 residues: ATP synthase subunit beta (486 aa).

Positions 1–12 are enriched in basic and acidic residues; that stretch reads MTTTAEKTDRPG. The tract at residues 1 to 22 is disordered; it reads MTTTAEKTDRPGKPGSSDTSGR. 171-178 is a binding site for ATP; the sequence is GGAGVGKT.

This sequence belongs to the ATPase alpha/beta chains family. F-type ATPases have 2 components, CF(1) - the catalytic core - and CF(0) - the membrane proton channel. CF(1) has five subunits: alpha(3), beta(3), gamma(1), delta(1), epsilon(1). CF(0) has three main subunits: a(1), b(2) and c(9-12). The alpha and beta chains form an alternating ring which encloses part of the gamma chain. CF(1) is attached to CF(0) by a central stalk formed by the gamma and epsilon chains, while a peripheral stalk is formed by the delta and b chains.

The protein resides in the cell membrane. The catalysed reaction is ATP + H2O + 4 H(+)(in) = ADP + phosphate + 5 H(+)(out). Functionally, produces ATP from ADP in the presence of a proton gradient across the membrane. The catalytic sites are hosted primarily by the beta subunits. The chain is ATP synthase subunit beta from Mycobacterium tuberculosis (strain ATCC 25177 / H37Ra).